A 100-amino-acid chain; its full sequence is Co-chaperonin GroES (100 aa).

It belongs to the GroES chaperonin family. As to quaternary structure, heptamer of 7 subunits arranged in a ring. Interacts with the chaperonin GroEL.

It localises to the cytoplasm. Together with the chaperonin GroEL, plays an essential role in assisting protein folding. The GroEL-GroES system forms a nano-cage that allows encapsulation of the non-native substrate proteins and provides a physical environment optimized to promote and accelerate protein folding. GroES binds to the apical surface of the GroEL ring, thereby capping the opening of the GroEL channel. The sequence is that of Co-chaperonin GroES from Mycobacterium marinum (strain ATCC BAA-535 / M).